The sequence spans 475 residues: Aspartyl/glutamyl-tRNA(Asn/Gln) amidotransferase subunit B (475 aa).

It belongs to the GatB/GatE family. GatB subfamily. As to quaternary structure, heterotrimer of A, B and C subunits.

The catalysed reaction is L-glutamyl-tRNA(Gln) + L-glutamine + ATP + H2O = L-glutaminyl-tRNA(Gln) + L-glutamate + ADP + phosphate + H(+). It carries out the reaction L-aspartyl-tRNA(Asn) + L-glutamine + ATP + H2O = L-asparaginyl-tRNA(Asn) + L-glutamate + ADP + phosphate + 2 H(+). Functionally, allows the formation of correctly charged Asn-tRNA(Asn) or Gln-tRNA(Gln) through the transamidation of misacylated Asp-tRNA(Asn) or Glu-tRNA(Gln) in organisms which lack either or both of asparaginyl-tRNA or glutaminyl-tRNA synthetases. The reaction takes place in the presence of glutamine and ATP through an activated phospho-Asp-tRNA(Asn) or phospho-Glu-tRNA(Gln). The chain is Aspartyl/glutamyl-tRNA(Asn/Gln) amidotransferase subunit B from Trichlorobacter lovleyi (strain ATCC BAA-1151 / DSM 17278 / SZ) (Geobacter lovleyi).